Consider the following 262-residue polypeptide: Spindlin-W (262 aa).

The disordered stretch occupies residues 1–49 (MKTPFGKSPAQRSRADAGHTRVSASMMKKRTSHKKHRNNVGPSKPISQP). A compositionally biased stretch (basic residues) spans 27 to 38 (MKKRTSHKKHRN).

It belongs to the SPIN/STSY family. Expressed predominantly in ovarian granulosa and thecal cell.

Its subcellular location is the nucleus. Functionally, may play a role in mitosis. The chain is Spindlin-W (SPINW) from Gallus gallus (Chicken).